The following is a 465-amino-acid chain: Coumaroyl-CoA:anthocyanidin 3-O-glucoside-6''-O-coumaroyltransferase 2 (465 aa).

Residue methionine 1 is modified to N-acetylmethionine. Active-site proton acceptor residues include histidine 173 and aspartate 406.

Belongs to the plant acyltransferase family. Highly expressed in flowers, and leaves. Lower levels of expression in stems, roots and siliques.

Functionally, involved in the acylation of the 6'' position of the 3-O-glucose residue of anthocyanin. Also able to use flavonol 3-glucosides as the acyl acceptor. This is Coumaroyl-CoA:anthocyanidin 3-O-glucoside-6''-O-coumaroyltransferase 2 (3AT2) from Arabidopsis thaliana (Mouse-ear cress).